Consider the following 365-residue polypeptide: Bifunctional chorismate mutase/prephenate dehydratase (365 aa).

One can recognise a Chorismate mutase domain in the interval 1 to 96; the sequence is MADQDQLKAL…SCLALEQPLK (96 aa). Residues arginine 11, arginine 28, lysine 39, and glutamate 57 each coordinate substrate. A Prephenate dehydratase domain is found at 97-272; that stretch reads VAYLGPEGTF…NSTRFLIIGN (176 aa). An ACT domain is found at 284-361; sequence SIIVSMRNKP…VALKVLGSYP (78 aa).

It localises to the cytoplasm. The catalysed reaction is chorismate = prephenate. The enzyme catalyses prephenate + H(+) = 3-phenylpyruvate + CO2 + H2O. It participates in amino-acid biosynthesis; L-phenylalanine biosynthesis; phenylpyruvate from prephenate: step 1/1. It functions in the pathway metabolic intermediate biosynthesis; prephenate biosynthesis; prephenate from chorismate: step 1/1. Catalyzes the Claisen rearrangement of chorismate to prephenate and the decarboxylation/dehydration of prephenate to phenylpyruvate. The chain is Bifunctional chorismate mutase/prephenate dehydratase (pheA) from Pseudomonas aeruginosa (strain ATCC 15692 / DSM 22644 / CIP 104116 / JCM 14847 / LMG 12228 / 1C / PRS 101 / PAO1).